The primary structure comprises 80 residues: Teretoxin Tan6.1 (80 aa).

A signal peptide spans 1 to 21; that stretch reads MATSGRLLCLCLVLGLVFESL. Residues 22-34 constitute a propeptide that is removed on maturation; it reads GHPGARLPKDGKR.

The protein belongs to the teretoxin M (TM) superfamily. Post-translationally, contains 3 disulfide bonds. As to expression, expressed by the venom duct.

Its subcellular location is the secreted. The polypeptide is Teretoxin Tan6.1 (Terebra anilis (Auger snail)).